Reading from the N-terminus, the 139-residue chain is Large ribosomal subunit protein uL16 (139 aa).

The protein belongs to the universal ribosomal protein uL16 family. Part of the 50S ribosomal subunit.

Its function is as follows. Binds 23S rRNA and is also seen to make contacts with the A and possibly P site tRNAs. This Neorickettsia sennetsu (strain ATCC VR-367 / Miyayama) (Ehrlichia sennetsu) protein is Large ribosomal subunit protein uL16 (rplP).